We begin with the raw amino-acid sequence, 152 residues long: Ubiquitin-conjugating enzyme E2 2 (152 aa).

One can recognise a UBC core domain in the interval 4-150; that stretch reads PARKRLMRDF…VREVVEQSWT (147 aa). The Glycyl thioester intermediate role is filled by Cys88.

Belongs to the ubiquitin-conjugating enzyme family. In terms of tissue distribution, expressed in all tissues examined. Lower levels found in leaves.

It carries out the reaction S-ubiquitinyl-[E1 ubiquitin-activating enzyme]-L-cysteine + [E2 ubiquitin-conjugating enzyme]-L-cysteine = [E1 ubiquitin-activating enzyme]-L-cysteine + S-ubiquitinyl-[E2 ubiquitin-conjugating enzyme]-L-cysteine.. The protein operates within protein modification; protein ubiquitination. Its function is as follows. Accepts the ubiquitin from the E1 complex and catalyzes its covalent attachment to other proteins. The protein is Ubiquitin-conjugating enzyme E2 2 (UBC2) of Arabidopsis thaliana (Mouse-ear cress).